A 207-amino-acid chain; its full sequence is N-(5'-phosphoribosyl)anthranilate isomerase (207 aa).

Belongs to the TrpF family.

It carries out the reaction N-(5-phospho-beta-D-ribosyl)anthranilate = 1-(2-carboxyphenylamino)-1-deoxy-D-ribulose 5-phosphate. It functions in the pathway amino-acid biosynthesis; L-tryptophan biosynthesis; L-tryptophan from chorismate: step 3/5. This chain is N-(5'-phosphoribosyl)anthranilate isomerase, found in Petrotoga mobilis (strain DSM 10674 / SJ95).